Consider the following 429-residue polypeptide: Adenylosuccinate synthetase (429 aa).

Residues 11–17 and 39–41 each bind GTP; these read GDEGKGK and GHT. Residue Asp-12 is the Proton acceptor of the active site. 2 residues coordinate Mg(2+): Asp-12 and Gly-39. IMP is bound by residues 12 to 15, 37 to 40, Thr-130, Arg-144, Asn-226, Thr-241, and Arg-305; these read DEGK and NAGH. The active-site Proton donor is the His-40. 301 to 307 serves as a coordination point for substrate; sequence VTTGRRR. GTP-binding positions include Arg-307, 333–335, and 415–417; these read KLD and GVG.

The protein belongs to the adenylosuccinate synthetase family. Homodimer. The cofactor is Mg(2+).

It is found in the cytoplasm. The enzyme catalyses IMP + L-aspartate + GTP = N(6)-(1,2-dicarboxyethyl)-AMP + GDP + phosphate + 2 H(+). It participates in purine metabolism; AMP biosynthesis via de novo pathway; AMP from IMP: step 1/2. Plays an important role in the de novo pathway and in the salvage pathway of purine nucleotide biosynthesis. Catalyzes the first committed step in the biosynthesis of AMP from IMP. In Yarrowia lipolytica (strain CLIB 122 / E 150) (Yeast), this protein is Adenylosuccinate synthetase.